The following is a 210-amino-acid chain: Glycerol-3-phosphate acyltransferase (210 aa).

A run of 5 helical transmembrane segments spans residues 4–24, 52–72, 82–102, 118–138, and 159–179; these read LIVAVVAYLIGSVSFAVIVSA, AAILTLIGDAFKGWLAVWLTG, DTSVAIAAIAVFLGHLYPVFF, LAINPILGIATLLTWLIVAFF, and FLFGANVIALSIVAMSALLIW.

Belongs to the PlsY family. As to quaternary structure, probably interacts with PlsX.

The protein resides in the cell inner membrane. The enzyme catalyses an acyl phosphate + sn-glycerol 3-phosphate = a 1-acyl-sn-glycero-3-phosphate + phosphate. Its pathway is lipid metabolism; phospholipid metabolism. Catalyzes the transfer of an acyl group from acyl-phosphate (acyl-PO(4)) to glycerol-3-phosphate (G3P) to form lysophosphatidic acid (LPA). This enzyme utilizes acyl-phosphate as fatty acyl donor, but not acyl-CoA or acyl-ACP. This is Glycerol-3-phosphate acyltransferase from Paraburkholderia phymatum (strain DSM 17167 / CIP 108236 / LMG 21445 / STM815) (Burkholderia phymatum).